The chain runs to 232 residues: Homeobox protein Rhox13 (232 aa).

The interval 45–114 is disordered; sequence QAAVASSHDS…EAAAPSVAAV (70 aa). A compositionally biased stretch (acidic residues) spans 68–105; that stretch reads SDSESESDSESESDSSDSSDESDDDSSTSDEDTSDPEE. The segment at residues 148–207 is a DNA-binding region (homeobox); sequence RRGPPFHFAQWQVEEMESLFEETQYPDLLTRGELARTLNVPEVKVKVWFTNRRAKQRKIE.

The protein belongs to the paired-like homeobox family.

It localises to the nucleus. In terms of biological role, probable transcription factor. In Mus musculus (Mouse), this protein is Homeobox protein Rhox13.